The following is a 336-amino-acid chain: Alpha-N-acetylgalactosaminide alpha-2,6-sialyltransferase 5 (336 aa).

Over 1-8 (MKTLMRHG) the chain is Cytoplasmic. Residues 9–29 (LAVCLVLTTMCTSLLLVYSSL) form a helical; Signal-anchor for type II membrane protein membrane-spanning segment. The Lumenal segment spans residues 30 to 336 (GSQKERPPQQ…VNHAEGKPVF (307 aa)). The tract at residues 34 to 76 (ERPPQQQQQQQQQQQQAATATGSTQLVESSPQPRRTAPAGPRQ) is disordered. Over residues 38 to 49 (QQQQQQQQQQQQ) the composition is skewed to low complexity. Residues 50 to 66 (AATATGSTQLVESSPQP) show a composition bias toward polar residues. C96 and C245 are disulfide-bonded. N-linked (GlcNAc...) asparagine glycosylation is found at N137 and N161.

Belongs to the glycosyltransferase 29 family. In terms of tissue distribution, high expression in forebrain and to a lesser extent in cerebellum. No expression in salivary gland, intestine, liver, kidney, heart, lung, thymus and spleen.

The protein localises to the golgi apparatus membrane. It catalyses the reaction a ganglioside GM1b (d18:1(4E)) + CMP-N-acetyl-beta-neuraminate = a ganglioside GD1alpha (d18:1(4E)) + CMP + H(+). It carries out the reaction N-acetyl-alpha-neuraminosyl-(2-&gt;3)-beta-D-galactosyl-(1-&gt;3)-N-acetyl-beta-D-glucosaminyl-(1-&gt;3)-beta-D-galactosyl-(1-&gt;4)-beta-D-glucosyl-(1&lt;-&gt;1')-N-acyl-sphing-4-enine + CMP-N-acetyl-beta-neuraminate = N-acetyl-alpha-neuraminosyl-(2-&gt;3)-beta-D-galactosyl-(1-&gt;3)-[N-acetyl-alpha-neuraminosyl-(2-&gt;6)]-N-acetyl-beta-D-glucosaminyl-(1-&gt;3)-beta-D-galactosyl-(1-&gt;4)-beta-D-glucosyl-(1&lt;-&gt;1')-N-acyl-sphing-4-enine + CMP + H(+). Its pathway is glycolipid biosynthesis. Functionally, predominantly catalyzes the biosynthesis of ganglioside GD1alpha from GM1b in the brain, by transferring the sialyl group (N-acetyl-alpha-neuraminyl or NeuAc) from CMP-NeuAc to the GalNAc residue on the NeuAc-alpha-2,3-Gal-beta-1,3-GalNAc sequence of GM1b. GD1alpha is a critical molecule in the communication and interaction between neuronal cells and their supportive cells, particularly in brain tissues, and functions as an adhesion molecule in the process of metastasis. Also shows activity towards sialyl Lc4Cer (N-acetyl-alpha-neuraminosyl-(2-&gt;3)-beta-D-galactosyl-(1-&gt;3)-N-acetyl-beta-D-glucosaminyl-(1-&gt;3)-beta-D-galactosyl-(1-&gt;4)-beta-D-glucosyl-(1&lt;-&gt;1')-N-acyl-sphing-4-enine) generating disialyl Lc4Cer, which can lead to the synthesis of disialyl Lewis a (Le(a)), suggested to be a cancer-associated antigen. The sequence is that of Alpha-N-acetylgalactosaminide alpha-2,6-sialyltransferase 5 (St6galnac5) from Mus musculus (Mouse).